The sequence spans 77 residues: Large ribosomal subunit protein bL28 (77 aa).

It belongs to the bacterial ribosomal protein bL28 family.

In Variovorax paradoxus (strain S110), this protein is Large ribosomal subunit protein bL28.